Here is a 316-residue protein sequence, read N- to C-terminus: NAC domain-containing protein 22 (316 aa).

In terms of domain architecture, NAC spans 17–170; it reads DLPGFRFHPT…DMVLCKIYRK (154 aa). The DNA-binding element occupies 117-176; sequence IGLKKTLVFYQGRAPRGTKTDWVMNEYRLPDYGAARAAAPPPKEDMVLCKIYRKATPLKE. A disordered region spans residues 229–260; sequence QSSSSSAAPSGSSSKNGGAGAPREAKKEEADV. A compositionally biased stretch (low complexity) spans 230–244; that stretch reads SSSSSAAPSGSSSKN.

Its subcellular location is the nucleus. Functionally, transcription activator that binds sequence-specific DNA motifs. Involved in stress response. Plays a positive role in drought and salt stress tolerance through the modulation of abscisic acid-mediated signaling. This is NAC domain-containing protein 22 from Oryza sativa subsp. japonica (Rice).